Consider the following 430-residue polypeptide: Glutamate-1-semialdehyde 2,1-aminomutase (430 aa).

Lys265 carries the post-translational modification N6-(pyridoxal phosphate)lysine.

This sequence belongs to the class-III pyridoxal-phosphate-dependent aminotransferase family. HemL subfamily. Homodimer. Pyridoxal 5'-phosphate serves as cofactor.

The protein localises to the cytoplasm. It carries out the reaction (S)-4-amino-5-oxopentanoate = 5-aminolevulinate. It participates in porphyrin-containing compound metabolism; protoporphyrin-IX biosynthesis; 5-aminolevulinate from L-glutamyl-tRNA(Glu): step 2/2. This is Glutamate-1-semialdehyde 2,1-aminomutase (hemL) from Helicobacter pylori (strain ATCC 700392 / 26695) (Campylobacter pylori).